The primary structure comprises 105 residues: Replication restart protein PriB (105 aa).

Positions 1 to 102 (MTANRLVLTG…LHAEQIELID (102 aa)) constitute an SSB domain.

Belongs to the PriB family. Homodimer. Interacts with PriA and DnaT. Component of the replication restart primosome. Primosome assembly occurs via a 'hand-off' mechanism. PriA binds to replication forks, subsequently PriB then DnaT bind; DnaT then displaces ssDNA to generate the helicase loading substrate.

In terms of biological role, involved in the restart of stalled replication forks, which reloads the replicative helicase on sites other than the origin of replication; the PriA-PriB pathway is the major replication restart pathway. During primosome assembly it facilitates complex formation between PriA and DnaT on DNA; stabilizes PriA on DNA. Stimulates the DNA unwinding activity of PriA helicase. The polypeptide is Replication restart protein PriB (Proteus mirabilis (strain HI4320)).